A 364-amino-acid chain; its full sequence is GDSL esterase/lipase At1g29660 (364 aa).

An N-terminal signal peptide occupies residues 1–26 (MESYLRKWCLVSVWVLLLGLGFKVKA). Ser-39 acts as the Nucleophile in catalysis. Residues Asp-328 and His-331 each act as charge relay system in the active site.

It belongs to the 'GDSL' lipolytic enzyme family. As to expression, found in phloem exudates.

It localises to the secreted. The protein resides in the extracellular space. It is found in the apoplast. In terms of biological role, involved in EDS1-dependent systemic acquired resistance, maybe in phloem-mediated long-distance signaling. The chain is GDSL esterase/lipase At1g29660 from Arabidopsis thaliana (Mouse-ear cress).